A 503-amino-acid polypeptide reads, in one-letter code: Inosine-5'-monophosphate dehydrogenase (503 aa).

Positions 20 and 22 each coordinate K(+). CBS domains lie at 103 to 163 and 167 to 228; these read FVVS…ETKV and MTPF…LVDS. Residue 261–263 participates in NAD(+) binding; the sequence is DSS. 4 residues coordinate K(+): D264, F266, G314, and G316. 312–314 is a binding site for NAD(+); sequence GIG. IMP is bound at residue S317. Residue C319 participates in K(+) binding. C319 serves as the catalytic Thioimidate intermediate. Residues 358–360, 381–382, and 405–409 contribute to the IMP site; these read DGG, GR, and YWGEG. R418 serves as the catalytic Proton acceptor. E431 is a binding site for IMP. Residues N460, E485, G486, and G487 each coordinate K(+).

Belongs to the IMPDH/GMPR family. Homotetramer. K(+) is required as a cofactor.

The protein localises to the cytoplasm. It catalyses the reaction IMP + NAD(+) + H2O = XMP + NADH + H(+). Its pathway is purine metabolism; XMP biosynthesis via de novo pathway; XMP from IMP: step 1/1. Mycophenolic acid (MPA) is a non-competitive inhibitor that prevents formation of the closed enzyme conformation by binding to the same site as the amobile flap. In contrast, mizoribine monophosphate (MZP) is a competitive inhibitor that induces the closed conformation. MPA is a potent inhibitor of mammalian IMPDHs but a poor inhibitor of the bacterial enzymes. MZP is a more potent inhibitor of bacterial IMPDH. Its function is as follows. Catalyzes the conversion of inosine 5'-phosphate (IMP) to xanthosine 5'-phosphate (XMP), the first committed and rate-limiting step in the de novo synthesis of guanine nucleotides, and therefore plays an important role in the regulation of cell growth. Could also have a single-stranded nucleic acid-binding activity and could play a role in RNA and/or DNA metabolism. In Tritrichomonas foetus (Trichomonas foetus), this protein is Inosine-5'-monophosphate dehydrogenase.